A 354-amino-acid chain; its full sequence is N-acetyl-gamma-glutamyl-phosphate reductase (354 aa).

Residue Cys156 is part of the active site.

It belongs to the NAGSA dehydrogenase family. Type 1 subfamily.

It is found in the cytoplasm. It carries out the reaction N-acetyl-L-glutamate 5-semialdehyde + phosphate + NADP(+) = N-acetyl-L-glutamyl 5-phosphate + NADPH + H(+). It participates in amino-acid biosynthesis; L-arginine biosynthesis; N(2)-acetyl-L-ornithine from L-glutamate: step 3/4. Catalyzes the NADPH-dependent reduction of N-acetyl-5-glutamyl phosphate to yield N-acetyl-L-glutamate 5-semialdehyde. The polypeptide is N-acetyl-gamma-glutamyl-phosphate reductase (Bordetella bronchiseptica (strain ATCC BAA-588 / NCTC 13252 / RB50) (Alcaligenes bronchisepticus)).